The chain runs to 102 residues: Small ribosomal subunit protein uS10c (102 aa).

This sequence belongs to the universal ribosomal protein uS10 family. Part of the 30S ribosomal subunit.

It is found in the plastid. The protein resides in the chloroplast. Functionally, involved in the binding of tRNA to the ribosomes. In Guillardia theta (Cryptophyte), this protein is Small ribosomal subunit protein uS10c.